We begin with the raw amino-acid sequence, 296 residues long: Protoheme IX farnesyltransferase (296 aa).

The next 9 membrane-spanning stretches (helical) occupy residues 27–47, 48–68, 98–118, 120–140, 148–168, 175–195, 219–239, 242–262, and 274–294; these read IMYL…GTIH, PLIG…AGAL, ALEC…LTVN, VSAI…TMVL, IVIG…SVTG, LLLF…LSLL, HIMG…LYVA, VLYE…AYCL, and CMGL…AIAL.

This sequence belongs to the UbiA prenyltransferase family. Protoheme IX farnesyltransferase subfamily.

The protein localises to the cell inner membrane. It catalyses the reaction heme b + (2E,6E)-farnesyl diphosphate + H2O = Fe(II)-heme o + diphosphate. It functions in the pathway porphyrin-containing compound metabolism; heme O biosynthesis; heme O from protoheme: step 1/1. Functionally, converts heme B (protoheme IX) to heme O by substitution of the vinyl group on carbon 2 of heme B porphyrin ring with a hydroxyethyl farnesyl side group. This chain is Protoheme IX farnesyltransferase, found in Anaplasma phagocytophilum (strain HZ).